Consider the following 1105-residue polypeptide: Ran-binding protein 6 (1105 aa).

N-acetylalanine is present on alanine 2. 4 HEAT repeats span residues 219–257 (FKDF…TVPK), 361–399 (KVVL…GCHQ), 402–440 (ESIL…DFAP), and 444–483 (KKFH…DCPK). Positions 333-383 (DEMEEDDFDSNAVAAESALDRLACGLGGKVVLPMTKEHIMQMLQSPDWKYR) are ran-GTP binding. Residues 806-842 (KAKLEGHFKNQELRQVKRQEENYDQQVEMSLQDEDEC) adopt a coiled-coil conformation. HEAT repeat units lie at residues 866–905 (LPWF…HCSP), 908–946 (FKYV…FGGD), and 949–987 (RSLC…IGKI).

Belongs to the importin beta family.

Its subcellular location is the cytoplasm. It is found in the nucleus. In terms of biological role, may function in nuclear protein import as nuclear transport receptor. The polypeptide is Ran-binding protein 6 (RANBP6) (Homo sapiens (Human)).